A 42-amino-acid chain; its full sequence is Tachystatin-B2 (42 aa).

3 disulfide bridges follow: Cys-4–Cys-20, Cys-11–Cys-25, and Cys-19–Cys-37.

In terms of tissue distribution, granular hemocytes, small secretory granules.

It is found in the secreted. Exhibits stronger antimicrobial activity against the Gram-positive bacteria (S.aureus (IC(50) is 7.4 ug/ml)) and fungi (C.albicans (IC(50) is 3.0 ug/ml) and P.pastoris (IC(50) is 0.1 ug/ml)) than Gram-negative bacteria (E.coli no inhibition at 100 ug/ml). Binds to chitin (4.3 uM are required to obtain 50% of binding). Does not cause hemolysis on sheep erythrocytes. Has no blocking activity on the P-type calcium channel. In Tachypleus tridentatus (Japanese horseshoe crab), this protein is Tachystatin-B2.